The chain runs to 475 residues: Ribulose bisphosphate carboxylase large chain (475 aa).

Residues 1-2 (MV) constitute a propeptide that is removed on maturation. N-acetylproline is present on proline 3. N6,N6,N6-trimethyllysine is present on lysine 14. 2 residues coordinate substrate: asparagine 123 and threonine 173. Lysine 175 acts as the Proton acceptor in catalysis. Lysine 177 serves as a coordination point for substrate. Mg(2+) contacts are provided by lysine 201, aspartate 203, and glutamate 204. The residue at position 201 (lysine 201) is an N6-carboxylysine. Histidine 294 acts as the Proton acceptor in catalysis. 3 residues coordinate substrate: arginine 295, histidine 327, and serine 379.

The protein belongs to the RuBisCO large chain family. Type I subfamily. In terms of assembly, heterohexadecamer of 8 large chains and 8 small chains. Requires Mg(2+) as cofactor.

The protein resides in the plastid. The protein localises to the chloroplast. It catalyses the reaction 2 (2R)-3-phosphoglycerate + 2 H(+) = D-ribulose 1,5-bisphosphate + CO2 + H2O. It carries out the reaction D-ribulose 1,5-bisphosphate + O2 = 2-phosphoglycolate + (2R)-3-phosphoglycerate + 2 H(+). Its function is as follows. RuBisCO catalyzes two reactions: the carboxylation of D-ribulose 1,5-bisphosphate, the primary event in carbon dioxide fixation, as well as the oxidative fragmentation of the pentose substrate in the photorespiration process. Both reactions occur simultaneously and in competition at the same active site. This Stigeoclonium helveticum (Green alga) protein is Ribulose bisphosphate carboxylase large chain.